The sequence spans 258 residues: Regulatory protein RecX (258 aa).

The protein belongs to the RecX family.

The protein resides in the cytoplasm. Its function is as follows. Modulates RecA activity. This chain is Regulatory protein RecX, found in Streptococcus thermophilus (strain CNRZ 1066).